The primary structure comprises 277 residues: Large ribosomal subunit protein uL2 (277 aa).

Positions 223–277 are disordered; that stretch reads VVMNPIDHPHGGGEGRTSGGRHPVTPWGKPTKGKKTRSNKSTNKFILISRHKRKK.

This sequence belongs to the universal ribosomal protein uL2 family. Part of the 50S ribosomal subunit. Forms a bridge to the 30S subunit in the 70S ribosome.

Functionally, one of the primary rRNA binding proteins. Required for association of the 30S and 50S subunits to form the 70S ribosome, for tRNA binding and peptide bond formation. It has been suggested to have peptidyltransferase activity; this is somewhat controversial. Makes several contacts with the 16S rRNA in the 70S ribosome. The protein is Large ribosomal subunit protein uL2 of Nitrobacter hamburgensis (strain DSM 10229 / NCIMB 13809 / X14).